Consider the following 163-residue polypeptide: Pheromone-binding protein 1 (163 aa).

Residues 1 to 21 (MLGKISLLLLPVFVAINLVHS) form the signal peptide. Intrachain disulfides connect cysteine 40–cysteine 75, cysteine 71–cysteine 129, and cysteine 118–cysteine 138.

It belongs to the PBP/GOBP family. Antenna.

In terms of biological role, this major soluble protein in olfactory sensilla of male moths might serve to solubilize the extremely hydrophobic pheromone molecules and to transport pheromone through the aqueous lymph to receptors located on olfactory cilia. The protein is Pheromone-binding protein 1 of Antheraea pernyi (Chinese oak silk moth).